The primary structure comprises 535 residues: Hrp65 protein (535 aa).

The disordered stretch occupies residues 1 to 80 (MDVKAEAPNG…GMGPRGPMKN (80 aa)). 2 stretches are compositionally biased toward low complexity: residues 27-42 (ENMN…QNNN) and 50-64 (NKRN…FQNR). Over residues 65-74 (GGKGGPGMGP) the composition is skewed to gly residues. RRM domains lie at 113 to 185 (NRLY…FAPN) and 187 to 268 (TTIR…TFDH). Disordered regions lie at residues 346-411 (EHET…RRQQ) and 429-535 (QEMN…RRRY). The segment covering 434 to 459 (QGGGGGGGNGGNGNNQGGGGNQGGGR) has biased composition (gly residues). Residues 486 to 502 (GNQYQGNQHYQGNQDQG) show a composition bias toward low complexity. Residues 521 to 535 (DRGHRDDFQNKRRRY) show a composition bias toward basic and acidic residues.

Its subcellular location is the cytoplasm. The protein resides in the cytoskeleton. It localises to the nucleus. In terms of biological role, component of nuclear connecting fibers associated with the transport of ribonucleoprotein particles from either the chromosome to the nuclear pore complex or their transient retention in the nucleoplasm. This chain is Hrp65 protein (HRP65), found in Chironomus tentans (Midge).